We begin with the raw amino-acid sequence, 399 residues long: Presilphiperfolan-8-beta-ol synthase (399 aa).

The tract at residues 1-60 (MAIPALEPQLHDADTSSNNMSSNSTDSGYDTNSTTPLEKSEKPNTQELKQQQLDPKRPPF) is disordered. The segment covering 15-27 (TSSNNMSSNSTDS) has biased composition (low complexity). Positions 28 to 37 (GYDTNSTTPL) are enriched in polar residues. Residues Asp141, Asn285, and Ser289 each contribute to the Mg(2+) site. The DDXXD motif signature appears at 141 to 145 (DDQFD). (2E,6E)-farnesyl diphosphate is bound by residues Arg373 and Tyr374.

It belongs to the terpene synthase family. The cofactor is Mg(2+).

The enzyme catalyses (2E,6E)-farnesyl diphosphate + H2O = presilphiperfolan-8beta-ol + diphosphate. It functions in the pathway secondary metabolite biosynthesis. Presilphiperfolan-8-beta-ol synthase; part of the gene cluster that mediates the biosynthesis of botrydial. Botrydial is necessary for colonization of plant tissue by the T4 strain. It is a strain-dependent virulence factor since highly aggressive strains like SAS56 or B05 still retain substantial virulence when botrydial synthesis is impaired, since they produce also botcinic acid. The first step of botrydial biosynthesis is performed by the sesquiterpene synthase BOT2 which catalyzes the cyclization of farnesyl diphosphate (FPP) to presilphiperfolan-8-beta-ol (PSP). The cytochrome P450 monooxygenase BOT4 then catalyzes the hydroxylation at C-4 to give a probotryane intermediate. Acetylation of the hydroxyl at C-4 is carried out by the acetyltransferase BOT5, followed by the combined action of the P450 monooxygenases BOT3 and BOT1, to yield finally the glycol, via the regio- and stereospecific hydroxylations at C-10 and C-15 of the probotryane intermediates, respectively. The cleavage of the C10-C15 bond of probotryane skeleton is an intriguing and chemically important reaction, which could be mediated by some of the monooxygenases or by a combination of them. It is possible that either BOT3 or BOT1 would oxidize either the 10- or the 15-hydroxy group to the hydroperoxide derivative, which would then undergo heterolytic fragmentation to give the dialdehyde botrydial. Finally, the dehydrogenase BOT7 might be involved in the conversion of botrydial to dihydrobotrydial. This chain is Presilphiperfolan-8-beta-ol synthase (BOT2), found in Botryotinia fuckeliana (Noble rot fungus).